Here is a 193-residue protein sequence, read N- to C-terminus: NADH-quinone oxidoreductase subunit B (193 aa).

[4Fe-4S] cluster contacts are provided by cysteine 72, cysteine 73, cysteine 137, and cysteine 167.

It belongs to the complex I 20 kDa subunit family. In terms of assembly, NDH-1 is composed of 14 different subunits. Subunits NuoB, C, D, E, F, and G constitute the peripheral sector of the complex. [4Fe-4S] cluster is required as a cofactor.

It localises to the cell inner membrane. The catalysed reaction is a quinone + NADH + 5 H(+)(in) = a quinol + NAD(+) + 4 H(+)(out). Its function is as follows. NDH-1 shuttles electrons from NADH, via FMN and iron-sulfur (Fe-S) centers, to quinones in the respiratory chain. The immediate electron acceptor for the enzyme in this species is believed to be ubiquinone. Couples the redox reaction to proton translocation (for every two electrons transferred, four hydrogen ions are translocated across the cytoplasmic membrane), and thus conserves the redox energy in a proton gradient. The sequence is that of NADH-quinone oxidoreductase subunit B from Bradyrhizobium sp. (strain ORS 278).